The sequence spans 264 residues: Acyl-[acyl-carrier-protein]--UDP-N-acetylglucosamine O-acyltransferase (264 aa).

It belongs to the transferase hexapeptide repeat family. LpxA subfamily. As to quaternary structure, homotrimer.

The protein localises to the cytoplasm. The catalysed reaction is a (3R)-hydroxyacyl-[ACP] + UDP-N-acetyl-alpha-D-glucosamine = a UDP-3-O-[(3R)-3-hydroxyacyl]-N-acetyl-alpha-D-glucosamine + holo-[ACP]. It participates in glycolipid biosynthesis; lipid IV(A) biosynthesis; lipid IV(A) from (3R)-3-hydroxytetradecanoyl-[acyl-carrier-protein] and UDP-N-acetyl-alpha-D-glucosamine: step 1/6. Functionally, involved in the biosynthesis of lipid A, a phosphorylated glycolipid that anchors the lipopolysaccharide to the outer membrane of the cell. In Leptothrix cholodnii (strain ATCC 51168 / LMG 8142 / SP-6) (Leptothrix discophora (strain SP-6)), this protein is Acyl-[acyl-carrier-protein]--UDP-N-acetylglucosamine O-acyltransferase.